Here is a 481-residue protein sequence, read N- to C-terminus: Probable squalene synthase (481 aa).

A run of 2 helical transmembrane segments spans residues 294–314 (SVFNFVAIPQAMAIATLELVF) and 416–436 (FLVLSMIGVLFVMGGLMIGAA).

The protein belongs to the phytoene/squalene synthase family. The cofactor is Mg(2+).

It is found in the endoplasmic reticulum membrane. It catalyses the reaction 2 (2E,6E)-farnesyl diphosphate + NADPH + H(+) = squalene + 2 diphosphate + NADP(+). It carries out the reaction 2 (2E,6E)-farnesyl diphosphate + NADH + H(+) = squalene + 2 diphosphate + NAD(+). It participates in terpene metabolism; lanosterol biosynthesis; lanosterol from farnesyl diphosphate: step 1/3. In terms of biological role, catalyzes the condensation of 2 two farnesyl pyrophosphate moieties to form squalene. It is the first committed enzyme of the sterol biosynthesis pathway. Required for the biosynthesis of ergosterol. In Neurospora crassa (strain ATCC 24698 / 74-OR23-1A / CBS 708.71 / DSM 1257 / FGSC 987), this protein is Probable squalene synthase (erg-6).